We begin with the raw amino-acid sequence, 231 residues long: 5'-methylthioadenosine/S-adenosylhomocysteine nucleosidase (231 aa).

Glu12 (proton acceptor) is an active-site residue. Substrate contacts are provided by residues Gly78, Met153, and 174–175 (ME). Asp198 functions as the Proton donor in the catalytic mechanism.

This sequence belongs to the PNP/UDP phosphorylase family. MtnN subfamily.

It carries out the reaction S-adenosyl-L-homocysteine + H2O = S-(5-deoxy-D-ribos-5-yl)-L-homocysteine + adenine. The catalysed reaction is S-methyl-5'-thioadenosine + H2O = 5-(methylsulfanyl)-D-ribose + adenine. The enzyme catalyses 5'-deoxyadenosine + H2O = 5-deoxy-D-ribose + adenine. The protein operates within amino-acid biosynthesis; L-methionine biosynthesis via salvage pathway; S-methyl-5-thio-alpha-D-ribose 1-phosphate from S-methyl-5'-thioadenosine (hydrolase route): step 1/2. Catalyzes the irreversible cleavage of the glycosidic bond in both 5'-methylthioadenosine (MTA) and S-adenosylhomocysteine (SAH/AdoHcy) to adenine and the corresponding thioribose, 5'-methylthioribose and S-ribosylhomocysteine, respectively. Also cleaves 5'-deoxyadenosine, a toxic by-product of radical S-adenosylmethionine (SAM) enzymes, into 5-deoxyribose and adenine. The sequence is that of 5'-methylthioadenosine/S-adenosylhomocysteine nucleosidase from Bacillus cytotoxicus (strain DSM 22905 / CIP 110041 / 391-98 / NVH 391-98).